Here is a 372-residue protein sequence, read N- to C-terminus: 4-hydroxy-3-methylbut-2-en-1-yl diphosphate synthase (flavodoxin) (372 aa).

Residues Cys270, Cys273, Cys305, and Glu312 each contribute to the [4Fe-4S] cluster site.

The protein belongs to the IspG family. The cofactor is [4Fe-4S] cluster.

It carries out the reaction (2E)-4-hydroxy-3-methylbut-2-enyl diphosphate + oxidized [flavodoxin] + H2O + 2 H(+) = 2-C-methyl-D-erythritol 2,4-cyclic diphosphate + reduced [flavodoxin]. Its pathway is isoprenoid biosynthesis; isopentenyl diphosphate biosynthesis via DXP pathway; isopentenyl diphosphate from 1-deoxy-D-xylulose 5-phosphate: step 5/6. Converts 2C-methyl-D-erythritol 2,4-cyclodiphosphate (ME-2,4cPP) into 1-hydroxy-2-methyl-2-(E)-butenyl 4-diphosphate. This Marinobacter nauticus (strain ATCC 700491 / DSM 11845 / VT8) (Marinobacter aquaeolei) protein is 4-hydroxy-3-methylbut-2-en-1-yl diphosphate synthase (flavodoxin).